Here is a 2108-residue protein sequence, read N- to C-terminus: Mycocerosic acid synthase-like polyketide synthase (2108 aa).

Residues 1 to 23 form the signal peptide; the sequence is MGKERTKTVDRTRVTPVAVIGMG. The N-palmitoyl cysteine moiety is linked to residue Cys-24. Cys-24 carries the S-diacylglycerol cysteine lipid modification. The Ketosynthase family 3 (KS3) domain occupies 24-436; that stretch reads CRLPGGIDSP…GTNVHAIVEQ (413 aa). Cys-185 (acyl-thioester intermediate; for beta-ketoacyl synthase activity) is an active-site residue. Residues His-320 and His-356 each act as for beta-ketoacyl synthase activity in the active site. The tract at residues 438–542 is linker domain (LD); that stretch reads PVPAPESGAP…PYPPAVGQDD (105 aa). Residues 543-842 form an acyltransferase (AT) region; that stretch reads RGPVWVFSGQ…AAALAGMRRE (300 aa). Residue Ser-634 is the Acyl-ester intermediate; for acyltransferase activity of the active site. The dehydratase (DH) stretch occupies residues 900-1184; sequence NTVAVHPLLG…LAVRGLQLGT (285 aa). The N-terminal hotdog fold stretch occupies residues 905 to 1025; the sequence is HPLLGSHVRL…AVLHVVREAD (121 aa). Residues 905–1191 form the PKS/mFAS DH domain; it reads HPLLGSHVRL…LGTGASQASE (287 aa). His-938 acts as the Proton acceptor; for dehydratase activity in catalysis. Positions 1044 to 1191 are C-terminal hotdog fold; that stretch reads PHKVDGAEVR…LGTGASQASE (148 aa). The active-site Proton donor; for dehydratase activity is Asp-1108. A pseudo beta-ketoacyl reductase (PsiKR) region spans residues 1220–1391; that stretch reads AWLLISTCDA…SGEDETAWRN (172 aa). The enoylreductase (ER) stretch occupies residues 1419–1743; sequence AGMRLQIRTP…EHTGKLILDV (325 aa). The interval 1765–2004 is beta-ketoacyl reductase (KR); that stretch reads GSYIITGGLG…HSPFAEKFQS (240 aa). Residues 1773-1776, 1796-1799, 1824-1825, and 1897-1898 contribute to the NADP(+) site; these read LGGL, SRSQ, DI, and FS. Positions 2025–2101 constitute a Carrier domain; that stretch reads EEWPDRLRRL…DLMCDKLAAD (77 aa). Residue Ser-2060 is modified to O-(pantetheine 4'-phosphoryl)serine.

Homodimer.

It is found in the cell membrane. Its pathway is lipid metabolism; fatty acid biosynthesis. Its function is as follows. Polyketide synthase likely involved in the biosynthesis of a polymethyl-branched fatty acid (PMB-FA) that might only be produced during host infection. Is required for the full virulence of M.tuberculosis during host infection. In Mycobacterium tuberculosis (strain ATCC 25618 / H37Rv), this protein is Mycocerosic acid synthase-like polyketide synthase.